The following is a 396-amino-acid chain: Elongation factor Tu (396 aa).

Positions 10-206 (KPHVNVGTIG…ALDTYIPEPE (197 aa)) constitute a tr-type G domain. The tract at residues 19 to 26 (GHVDHGKT) is G1. Position 19 to 26 (19 to 26 (GHVDHGKT)) interacts with GTP. T26 is a binding site for Mg(2+). Positions 60–64 (GITIN) are G2. A G3 region spans residues 81 to 84 (DCPG). Residues 81–85 (DCPGH) and 136–139 (NKAD) each bind GTP. The tract at residues 136-139 (NKAD) is G4. Residues 174 to 176 (SAL) form a G5 region.

Belongs to the TRAFAC class translation factor GTPase superfamily. Classic translation factor GTPase family. EF-Tu/EF-1A subfamily. As to quaternary structure, monomer.

The protein localises to the cytoplasm. The enzyme catalyses GTP + H2O = GDP + phosphate + H(+). Functionally, GTP hydrolase that promotes the GTP-dependent binding of aminoacyl-tRNA to the A-site of ribosomes during protein biosynthesis. The protein is Elongation factor Tu of Thiobacillus denitrificans (strain ATCC 25259 / T1).